A 133-amino-acid polypeptide reads, in one-letter code: Histone H2A (133 aa).

The segment covering 1–10 (MTGGKSGGKA) has biased composition (gly residues). The disordered stretch occupies residues 1 to 25 (MTGGKSGGKASGSKSSQSRSSKAGL). Lys-5 and Lys-9 each carry N6-acetyllysine. Over residues 11–24 (SGSKSSQSRSSKAG) the composition is skewed to low complexity. At Gln-106 the chain carries N5-methylglutamine. At Ser-130 the chain carries Phosphoserine. The short motif at 130–131 (SQ) is the [ST]-Q motif element.

It belongs to the histone H2A family. The nucleosome is a histone octamer containing two molecules each of H2A, H2B, H3 and H4 assembled in one H3-H4 heterotetramer and two H2A-H2B heterodimers. The octamer wraps approximately 147 bp of DNA. Phosphorylated to form H2AS128ph (gamma-H2A) in response to DNA double-strand breaks (DSBs) generated by exogenous genotoxic agents and by stalled replication forks. Phosphorylation is dependent on the DNA damage checkpoint kinases MEC1/ATR and TEL1/ATM, spreads on either side of a detected DSB site and may mark the surrounding chromatin for recruitment of proteins required for DNA damage signaling and repair. Gamma-H2A is removed from the DNA prior to the strand invasion-primer extension step of the repair process and subsequently dephosphorylated. Dephosphorylation is necessary for efficient recovery from the DNA damage checkpoint. Post-translationally, acetylated by ESA1 to form H2AK4ac and H2AK7ac.

Its subcellular location is the nucleus. It localises to the chromosome. Core component of nucleosome which plays a central role in DNA double strand break (DSB) repair. Nucleosomes wrap and compact DNA into chromatin, limiting DNA accessibility to the cellular machineries which require DNA as a template. Histones thereby play a central role in transcription regulation, DNA repair, DNA replication and chromosomal stability. DNA accessibility is regulated via a complex set of post-translational modifications of histones, also called histone code, and nucleosome remodeling. The sequence is that of Histone H2A (HTA1) from Coccidioides immitis (strain RS) (Valley fever fungus).